A 372-amino-acid chain; its full sequence is Protein-glutamate methylesterase/protein-glutamine glutaminase 1 (372 aa).

The Response regulatory domain maps to 4-121 (KVLVVDDSSF…ATNKDDAILL (118 aa)). 4-aspartylphosphate is present on D55. Residues 138-174 (VVRPTTPTPPPRSSASSVLGGVSTHTQPAPVRSSHAA) are disordered. A CheB-type methylesterase domain is found at 179 to 372 (SGKQYKLLLI…ESILKESARG (194 aa)). Residues S191, H218, and D314 contribute to the active site.

Belongs to the CheB family. Phosphorylated by CheA. Phosphorylation of the N-terminal regulatory domain activates the methylesterase activity.

The protein localises to the cytoplasm. It carries out the reaction [protein]-L-glutamate 5-O-methyl ester + H2O = L-glutamyl-[protein] + methanol + H(+). It catalyses the reaction L-glutaminyl-[protein] + H2O = L-glutamyl-[protein] + NH4(+). In terms of biological role, involved in chemotaxis. Part of a chemotaxis signal transduction system that modulates chemotaxis in response to various stimuli. Catalyzes the demethylation of specific methylglutamate residues introduced into the chemoreceptors (methyl-accepting chemotaxis proteins or MCP) by CheR. Also mediates the irreversible deamidation of specific glutamine residues to glutamic acid. In Shewanella sp. (strain MR-4), this protein is Protein-glutamate methylesterase/protein-glutamine glutaminase 1.